A 221-amino-acid polypeptide reads, in one-letter code: MNFNVIIDHTLLKPQATSQDIKILIEEAKKYNFGAICIAPIWVKLAKKELKNTNIKIVTVIGFPLGSQISAIKQKEASLAIAHGADEIDMVMNIGKFKEKDFQFIINEINQIKKEIGAKILKVIIETALLSPHEIADATKLVSSTNADFIKTSTGFSYRGASEQDLKIIKENKSEKLAIKAAGGITNLADMENFYRLGATRFGTSKSLSIIKNLTDKKNQY.

The active-site Proton donor/acceptor is the Asp-89. Lys-151 acts as the Schiff-base intermediate with acetaldehyde in catalysis. Lys-180 functions as the Proton donor/acceptor in the catalytic mechanism.

This sequence belongs to the DeoC/FbaB aldolase family. DeoC type 1 subfamily.

It localises to the cytoplasm. The enzyme catalyses 2-deoxy-D-ribose 5-phosphate = D-glyceraldehyde 3-phosphate + acetaldehyde. Its pathway is carbohydrate degradation; 2-deoxy-D-ribose 1-phosphate degradation; D-glyceraldehyde 3-phosphate and acetaldehyde from 2-deoxy-alpha-D-ribose 1-phosphate: step 2/2. In terms of biological role, catalyzes a reversible aldol reaction between acetaldehyde and D-glyceraldehyde 3-phosphate to generate 2-deoxy-D-ribose 5-phosphate. This Mesomycoplasma hyopneumoniae (strain 232) (Mycoplasma hyopneumoniae) protein is Deoxyribose-phosphate aldolase.